Reading from the N-terminus, the 20-residue chain is Short cationic peptide-6a (20 aa).

Position 20 is a serine amide (serine 20).

Expressed by the venom gland.

Its subcellular location is the secreted. The protein is Short cationic peptide-6a of Cupiennius salei (American wandering spider).